The following is a 342-amino-acid chain: S-adenosylmethionine:tRNA ribosyltransferase-isomerase (342 aa).

This sequence belongs to the QueA family. Monomer.

Its subcellular location is the cytoplasm. The enzyme catalyses 7-aminomethyl-7-carbaguanosine(34) in tRNA + S-adenosyl-L-methionine = epoxyqueuosine(34) in tRNA + adenine + L-methionine + 2 H(+). The protein operates within tRNA modification; tRNA-queuosine biosynthesis. In terms of biological role, transfers and isomerizes the ribose moiety from AdoMet to the 7-aminomethyl group of 7-deazaguanine (preQ1-tRNA) to give epoxyqueuosine (oQ-tRNA). This chain is S-adenosylmethionine:tRNA ribosyltransferase-isomerase, found in Moorella thermoacetica (strain ATCC 39073 / JCM 9320).